Consider the following 249-residue polypeptide: MPTKFQLEEMLRAGVHFGHLARRWNPKMKPYIFMEKNGVHIIDLKKTLVMAEEALKAIEAIASTGREIMLVGTKKQAKVIIAEQAERAGMPYVCERWLGGMLTNFSTIRQSIRRMNAIERMETDGTFDMITKKERLMLIREKDKLVRILGGIANMNRLPAALFVVDIKKEHIAVKEARSLGIPIFAMVDTNCDPDEVDYVIPANDDAIRSIDLMVKAVADTILEARTLQVEQEVLAEMDEAAEEETAND.

This sequence belongs to the universal ribosomal protein uS2 family.

The protein is Small ribosomal subunit protein uS2 of Chlorobaculum tepidum (strain ATCC 49652 / DSM 12025 / NBRC 103806 / TLS) (Chlorobium tepidum).